The primary structure comprises 556 residues: RING finger protein 207 (556 aa).

An RING-type zinc finger spans residues 25–64 (CPLCHAQYERPCLLDCFHEFCAGCLRGRAADGRLACPLCQ). The B box-type; atypical zinc finger occupies 93–145 (TEVVRCANCDLECGKQDAETTYFCNTCGQPLCARCRDETHRARMFARHDIVAL). Cys98, Cys101, Cys127, and His132 together coordinate Zn(2+). Coiled coils occupy residues 218-273 (TREA…NKAE) and 385-425 (FTEH…SLIK). The interval 517–556 (FQVPVDEPSDHPQNTHDDGVNAEAPARVSTLKPAMEKEVS) is disordered. A compositionally biased stretch (basic and acidic residues) spans 524–535 (PSDHPQNTHDDG).

In terms of assembly, interacts with the core-glycosylated, but not the fully glycosylated form of KCNH2/HERG. Interacts with DNAJA1 and HSPA8. Interacts (via the C-terminus) with HSPA1A; this interaction additively increases KCNH2 expression.

Its subcellular location is the cytoplasm. In terms of biological role, plays a role in cardiac repolarization possibly by stabilizing membrane expression of the potassium channel KCNH2/HERG, or by assisting its synthesis, folding or export from the endoplasmic reticulum, in a heat shock protein-dependent manner. The chain is RING finger protein 207 (RNF207) from Bos taurus (Bovine).